A 280-amino-acid chain; its full sequence is Probable S-methyl-5'-thioinosine phosphorylase (280 aa).

Residues Thr-8 and 50–51 (RH) contribute to the phosphate site. A substrate-binding site is contributed by Met-175. Thr-176 provides a ligand contact to phosphate. 199-201 (NYA) lines the substrate pocket.

Belongs to the PNP/MTAP phosphorylase family. MTAP subfamily. In terms of assembly, homotrimer.

The catalysed reaction is S-methyl-5'-thioinosine + phosphate = 5-(methylsulfanyl)-alpha-D-ribose 1-phosphate + hypoxanthine. It functions in the pathway purine metabolism; purine nucleoside salvage. Catalyzes the reversible phosphorylation of S-methyl-5'-thioinosine (MTI) to hypoxanthine and 5-methylthioribose-1-phosphate. Involved in the breakdown of S-methyl-5'-thioadenosine (MTA), a major by-product of polyamine biosynthesis. Catabolism of (MTA) occurs via deamination to MTI and phosphorolysis to hypoxanthine. The chain is Probable S-methyl-5'-thioinosine phosphorylase from Methanothermobacter thermautotrophicus (strain ATCC 29096 / DSM 1053 / JCM 10044 / NBRC 100330 / Delta H) (Methanobacterium thermoautotrophicum).